Reading from the N-terminus, the 73-residue chain is Translational regulator CsrA (73 aa).

It belongs to the CsrA/RsmA family. Homodimer; the beta-strands of each monomer intercalate to form a hydrophobic core, while the alpha-helices form wings that extend away from the core.

It localises to the cytoplasm. Its function is as follows. A translational regulator that binds mRNA to regulate translation initiation and/or mRNA stability. Usually binds in the 5'-UTR at or near the Shine-Dalgarno sequence preventing ribosome-binding, thus repressing translation. Its main target seems to be the major flagellin gene, while its function is anatagonized by FliW. This chain is Translational regulator CsrA, found in Lachnospira eligens (strain ATCC 27750 / DSM 3376 / VPI C15-48 / C15-B4) (Eubacterium eligens).